A 377-amino-acid chain; its full sequence is Putrescine transport ATP-binding protein PotG (377 aa).

One can recognise an ABC transporter domain in the interval 20-250; sequence LEIRNLTKSY…PTTRYSAEFI (231 aa). 52-59 contributes to the ATP binding site; it reads GASGCGKS.

The protein belongs to the ABC transporter superfamily. As to quaternary structure, the complex is composed of two ATP-binding proteins (PotG), two transmembrane proteins (PotH and PotI) and a solute-binding protein (PotF).

Its subcellular location is the cell inner membrane. It carries out the reaction putrescine(out) + ATP + H2O = putrescine(in) + ADP + phosphate + H(+). Transport is feedback inhibited by intracellular polyamines. In terms of biological role, part of the ABC transporter complex PotFGHI involved in putrescine uptake. Responsible for energy coupling to the transport system. Imports putrescine for maintenance of the optimal concentration of polyamines necessary for cell growth in the presence of glucose. This Escherichia coli (strain K12) protein is Putrescine transport ATP-binding protein PotG.